A 485-amino-acid polypeptide reads, in one-letter code: ATP-dependent 6-phosphofructokinase 7 (485 aa).

ATP-binding positions include Gly101, 164–165, and 189–192; these read RG and GDGT. Position 190 (Asp190) interacts with Mg(2+). Substrate contacts are provided by residues 218–220, 263–265, Glu319, and 374–377; these read TID, MGR, and YMIR. Asp220 (proton acceptor) is an active-site residue. The segment at 449 to 485 is disordered; it reads SFLGPKDTSEEKKELPETPLLDDGAVDIPPVTKEVTK. Over residues 455–464 the composition is skewed to basic and acidic residues; it reads DTSEEKKELP.

This sequence belongs to the phosphofructokinase type A (PFKA) family. PPi-dependent PFK group II subfamily. Atypical ATP-dependent clade 'X' sub-subfamily. In terms of assembly, homotetramer. The cofactor is Mg(2+). Expressed in roots, leaves, stems and flowers.

It is found in the cytoplasm. The catalysed reaction is beta-D-fructose 6-phosphate + ATP = beta-D-fructose 1,6-bisphosphate + ADP + H(+). The protein operates within carbohydrate degradation; glycolysis; D-glyceraldehyde 3-phosphate and glycerone phosphate from D-glucose: step 3/4. Allosterically activated by AMP. In terms of biological role, catalyzes the phosphorylation of D-fructose 6-phosphate to fructose 1,6-bisphosphate by ATP, the first committing step of glycolysis. This is ATP-dependent 6-phosphofructokinase 7 from Arabidopsis thaliana (Mouse-ear cress).